The primary structure comprises 88 residues: Small ribosomal subunit protein bS20 (88 aa).

Belongs to the bacterial ribosomal protein bS20 family.

Its function is as follows. Binds directly to 16S ribosomal RNA. The protein is Small ribosomal subunit protein bS20 of Clostridium botulinum (strain 657 / Type Ba4).